A 258-amino-acid chain; its full sequence is Granzyme A (258 aa).

The signal sequence occupies residues Met-1–Cys-26. The propeptide at Glu-27–Gly-28 is activation peptide. The Peptidase S1 domain occupies Ile-29 to Ala-255. A disulfide bridge links Cys-52 with Cys-68. Catalysis depends on charge relay system residues His-67 and Asp-112. Disulfide bonds link Cys-146/Cys-217, Cys-178/Cys-196, and Cys-207/Cys-230. An N-linked (GlcNAc...) asparagine glycan is attached at Asn-169. Ser-211 acts as the Charge relay system in catalysis.

This sequence belongs to the peptidase S1 family. Granzyme subfamily. Homodimer; disulfide-linked. Interacts with APEX1.

It is found in the secreted. The protein resides in the cytoplasmic granule. The enzyme catalyses Hydrolysis of proteins, including fibronectin, type IV collagen and nucleolin. Preferential cleavage: -Arg-|-Xaa-, -Lys-|-Xaa- &gt;&gt; -Phe-|-Xaa- in small molecule substrates.. Its function is as follows. Abundant protease in the cytosolic granules of cytotoxic T-cells and NK-cells which activates caspase-independent pyroptosis when delivered into the target cell through the immunological synapse. It cleaves after Lys or Arg. Cleaves APEX1 after 'Lys-31' and destroys its oxidative repair activity. Cleaves the nucleosome assembly protein SET after 'Lys-189', which disrupts its nucleosome assembly activity and allows the SET complex to translocate into the nucleus to nick and degrade the DNA. The sequence is that of Granzyme A (GZMA) from Bos taurus (Bovine).